Reading from the N-terminus, the 602-residue chain is Transcription factor COE4 (602 aa).

An interaction with DNA region spans residues 64–67 (RKSN). The segment at 152 to 171 (CRVLLTHEIMCSRCCDRKSC) adopts a C5-type zinc-finger fold. Interaction with DNA regions lie at residues 198–205 (NCLKNAGN) and 237–240 (NNSK). Residues 256-338 (PCIKAISPGE…CKGCPGRFVY (83 aa)) form the IPT/TIG domain. 2 disordered regions span residues 448–476 (PEPG…SGYG) and 558–602 (PVLR…LAYS). The span at 560–569 (LRPPSSPPQA) shows a compositional bias: pro residues.

The protein belongs to the COE family. Forms either a homodimer or a heterodimer with a related family member. Interacts with MAPK3/ERK1. Interacts with STAT5A. As to expression, most highly expressed in cytotoxic NK cells, especially CD16(+) NK cells, followed by CD8(+) T-cells.

The protein resides in the nucleus. Transcription factor. Binds to specific sequence motif 5'-CCCNNG[GA]G-3' in regulatory elements of putative target immunoregulatory genes such as NKG7, GZMA, and TBX21. Positively modulates transcription of NKG7. May play a role in regulating FAS/CD95-mediated apoptosis in cytotoxic NK cells and T-cells, probably downstream of interleukin IL2 signaling. The chain is Transcription factor COE4 (EBF4) from Homo sapiens (Human).